A 57-amino-acid polypeptide reads, in one-letter code: Lantibiotic nukacin (57 aa).

The propeptide occupies 1 to 30 (MENSKVMKDIEVANLLEEVQEDELNEVLGA). A cross-link (beta-methyllanthionine (Thr-Cys)) is located at residues 39–44 (TVSHDC). Cross-links (lanthionine (Ser-Cys)) lie at residues 41–55 (SHDC…VFTC) and 48–56 (SFQFVFTCC). The residue at position 54 (threonine 54) is a 2,3-didehydrobutyrine.

In terms of processing, maturation of lantibiotics involves the enzymatic conversion of Thr, and Ser into dehydrated AA and the formation of thioether bonds with cysteine. This is followed by membrane translocation and cleavage of the modified precursor.

Its subcellular location is the secreted. Its function is as follows. Lanthionine-containing peptide antibiotic (lantibiotic) active on Gram-positive bacteria. The bactericidal activity of lantibiotics is based on depolarization of energized bacterial cytoplasmic membranes, initiated by the formation of aqueous transmembrane pores. The polypeptide is Lantibiotic nukacin (Staphylococcus simulans).